The chain runs to 65 residues: Small hydrophobic protein (65 aa).

Topologically, residues 1–20 (MGNTSITIEFTSKFWPYFTL) are intravirion. The segment at 6–15 (ITIEFTSKFW) is interaction with host BCAP31. Residues 21–44 (IHMILTPISLLIIITIMIAILNKL) traverse the membrane as a helical; Signal-anchor for type II membrane protein segment. An interaction with small-molecule inhibitor region spans residues 38-43 (IAILNK). At 45-65 (SEHKTFCNKTLELGQMYQINT) the chain is on the virion surface side. Asparagine 52 is a glycosylation site (N-linked (GlcNAc...) asparagine; by host).

The protein belongs to the orthopneumovirus small hydrophobic protein family. As to quaternary structure, homopentamer forming a funnel-like pore. Interacts with glycoprotein G; this interaction occurs on the surface of virion particles and infected cells. Interacts with host BCAP31 (via C-terminus); this interaction is direct. Four species of SH have been detected in infected cell cytoplasm: a 7.5 kDa non-glycosylated form (SH0), a 13-15 kDa form that contains one or two N-linked carbohydrate side chains of the high-mannose type (SHg), a 21-30 kDa polylactosaminoglycan-modified form of the protein (SHp), and the isoform generated by alternative translational initiation. Of these different forms, SH0 is by far the most abundant protein detected during virus infection. Post-translationally, tyrosine phosphorylated.

Its subcellular location is the virion membrane. It is found in the host cell membrane. The protein localises to the host Golgi apparatus membrane. The protein resides in the host endoplasmic reticulum membrane. Channel activity is inhibited by copper. Also inhibited by small-molecule pyronin B. Its function is as follows. Viroporin that forms a homopentameric ion channel displaying low ion selectivity. May play a role in virus morphogenesis and pathogenicity at various stages of the viral life cycle. Accumulates at the membrane of the Golgi apparatus in infected cells and may facilitate virus release by modifying the secretory pathway. May enhance host membrane permeability and disrupt cellular ion homeostasis, which can be sensed as damage-associated molecular patterns/danger signals, triggering NLRP3 inflammasome activation and inflammatory immune response. Also inhibits host TNFA-mediated signaling pathway and may delay apoptosis, allowing time for the virus to replicate. This Human respiratory syncytial virus B (strain 18537) protein is Small hydrophobic protein.